A 513-amino-acid polypeptide reads, in one-letter code: Lysine--tRNA ligase (513 aa).

Mg(2+) is bound by residues Glu422 and Glu429.

Belongs to the class-II aminoacyl-tRNA synthetase family. As to quaternary structure, homodimer. Requires Mg(2+) as cofactor.

The protein localises to the cytoplasm. It catalyses the reaction tRNA(Lys) + L-lysine + ATP = L-lysyl-tRNA(Lys) + AMP + diphosphate. This chain is Lysine--tRNA ligase, found in Tolumonas auensis (strain DSM 9187 / NBRC 110442 / TA 4).